Here is a 347-residue protein sequence, read N- to C-terminus: Heat-inducible transcription repressor HrcA (347 aa).

It belongs to the HrcA family.

In terms of biological role, negative regulator of class I heat shock genes (grpE-dnaK-dnaJ and groELS operons). Prevents heat-shock induction of these operons. The chain is Heat-inducible transcription repressor HrcA from Nocardia farcinica (strain IFM 10152).